Reading from the N-terminus, the 416-residue chain is Glutamyl-tRNA reductase (416 aa).

Residues 49-52, S105, 110-112, and Q116 each bind substrate; these read TCNR and EPQ. C50 (nucleophile) is an active-site residue. 185–190 is an NADP(+) binding site; the sequence is GAGETI.

Belongs to the glutamyl-tRNA reductase family. As to quaternary structure, homodimer.

The catalysed reaction is (S)-4-amino-5-oxopentanoate + tRNA(Glu) + NADP(+) = L-glutamyl-tRNA(Glu) + NADPH + H(+). The protein operates within porphyrin-containing compound metabolism; protoporphyrin-IX biosynthesis; 5-aminolevulinate from L-glutamyl-tRNA(Glu): step 1/2. In terms of biological role, catalyzes the NADPH-dependent reduction of glutamyl-tRNA(Glu) to glutamate 1-semialdehyde (GSA). The sequence is that of Glutamyl-tRNA reductase from Shewanella denitrificans (strain OS217 / ATCC BAA-1090 / DSM 15013).